The primary structure comprises 503 residues: Cytochrome P450 3A14 (503 aa).

C442 lines the heme pocket.

This sequence belongs to the cytochrome P450 family. It depends on heme as a cofactor.

It localises to the endoplasmic reticulum membrane. The protein localises to the microsome membrane. It catalyses the reaction an organic molecule + reduced [NADPH--hemoprotein reductase] + O2 = an alcohol + oxidized [NADPH--hemoprotein reductase] + H2O + H(+). Functionally, cytochromes P450 are a group of heme-thiolate monooxygenases. In liver microsomes, this enzyme is involved in an NADPH-dependent electron transport pathway. It oxidizes a variety of structurally unrelated compounds, including steroids, fatty acids, and xenobiotics. This chain is Cytochrome P450 3A14 (CYP3A14), found in Cavia porcellus (Guinea pig).